Reading from the N-terminus, the 376-residue chain is D-alanine--D-alanine ligase (376 aa).

Positions 153–366 (KLLLAGQGLP…YPELVHRLIQ (214 aa)) constitute an ATP-grasp domain. Position 185-240 (185-240 (VEALGYPVFVKPARAGSSIGITRVTSREGLAAAVAEAVSHDPKVVVEAALVGREIE)) interacts with ATP. D317, E333, and N335 together coordinate Mg(2+).

This sequence belongs to the D-alanine--D-alanine ligase family. Mg(2+) is required as a cofactor. Requires Mn(2+) as cofactor.

The protein resides in the cytoplasm. It carries out the reaction 2 D-alanine + ATP = D-alanyl-D-alanine + ADP + phosphate + H(+). Its pathway is cell wall biogenesis; peptidoglycan biosynthesis. In terms of biological role, cell wall formation. The protein is D-alanine--D-alanine ligase of Kineococcus radiotolerans (strain ATCC BAA-149 / DSM 14245 / SRS30216).